A 507-amino-acid chain; its full sequence is Arabinose import ATP-binding protein AraG (507 aa).

ABC transporter domains are found at residues 14–249 (LRFN…MVGR) and 249–505 (RDIQ…LPRT). 46–53 (GENGAGKS) lines the ATP pocket.

This sequence belongs to the ABC transporter superfamily. Arabinose importer (TC 3.A.1.2.2) family. As to quaternary structure, the complex is composed of two ATP-binding proteins (AraG), two transmembrane proteins (AraH) and a solute-binding protein (AraF).

It localises to the cell inner membrane. The catalysed reaction is L-arabinose(out) + ATP + H2O = L-arabinose(in) + ADP + phosphate + H(+). Part of the ABC transporter complex AraFGH involved in arabinose import. Responsible for energy coupling to the transport system. The protein is Arabinose import ATP-binding protein AraG of Pseudomonas savastanoi pv. phaseolicola (strain 1448A / Race 6) (Pseudomonas syringae pv. phaseolicola (strain 1448A / Race 6)).